A 324-amino-acid chain; its full sequence is Antihemorrhagic factor jMSF (324 aa).

The signal sequence occupies residues 1 to 19; sequence MHFLVALVLLGQIIGSTLS. 2 Cystatin fetuin-A-type domains span residues 22–130 and 141–254; these read VRGD…VKCH and RNCP…SDCV. Residues 23 to 25 carry the Cell attachment site motif; sequence RGD. 7 disulfides stabilise this stretch: Cys28–Cys315, Cys85–Cys96, Cys110–Cys129, Cys143–Cys146, Cys205–Cys217, Cys230–Cys253, and Cys287–Cys291. An N-linked (GlcNAc...) asparagine glycan is attached at Asn204. The N-linked (GlcNAc...) asparagine glycan is linked to Asn282.

As to quaternary structure, homodimer. In terms of tissue distribution, expressed by the liver.

It localises to the secreted. In terms of biological role, suppress hemorrhage induced by metalloproteinases from the same venom (brevilysin-H3, -H4, -H6) and from habu venom (weak inhibition of the metalloproteinases HR2A). The non-hemorrhagic brevilysin-H2 is strongly inhibited by jMSF, whereas the brevilysin-L6 is not inhibited. Does not inhibit serine and cysteine proteases such as trypsin, chymotrypsin, thermolysin, and papain. The inhibition may occur by formation of a non-covalent complex between this protein and the proteinases at their metalloproteinase domains. The sequence is that of Antihemorrhagic factor jMSF from Gloydius blomhoffii (Mamushi).